The chain runs to 486 residues: Cardiolipin synthase A (486 aa).

A run of 2 helical transmembrane segments spans residues 3-23 and 38-58; these read TVYT…IAGV and MAWL…YLAV. PLD phosphodiesterase domains are found at residues 219-246 and 399-426; these read MDLR…VDPR and EGGL…DMRS. Catalysis depends on residues His-224, Lys-226, Asp-231, His-404, Lys-406, and Asp-411.

The protein belongs to the phospholipase D family. Cardiolipin synthase subfamily. ClsA sub-subfamily.

It localises to the cell inner membrane. It catalyses the reaction 2 a 1,2-diacyl-sn-glycero-3-phospho-(1'-sn-glycerol) = a cardiolipin + glycerol. Its function is as follows. Catalyzes the reversible phosphatidyl group transfer from one phosphatidylglycerol molecule to another to form cardiolipin (CL) (diphosphatidylglycerol) and glycerol. The sequence is that of Cardiolipin synthase A from Escherichia coli O157:H7 (strain EC4115 / EHEC).